The following is a 387-amino-acid chain: Eukaryotic translation initiation factor 3 subunit M (387 aa).

One can recognise a PCI domain in the interval 181 to 340; that stretch reads LSSKVMIELL…QKVHISSTMH (160 aa).

Belongs to the eIF-3 subunit M family. Component of the eukaryotic translation initiation factor 3 (eIF-3) complex. The eIF-3 complex interacts with pix.

It is found in the cytoplasm. The protein localises to the golgi apparatus. Functionally, component of the eukaryotic translation initiation factor 3 (eIF-3) complex, which is involved in protein synthesis of a specialized repertoire of mRNAs and, together with other initiation factors, stimulates binding of mRNA and methionyl-tRNAi to the 40S ribosome. The eIF-3 complex specifically targets and initiates translation of a subset of mRNAs involved in cell proliferation. The chain is Eukaryotic translation initiation factor 3 subunit M from Drosophila sechellia (Fruit fly).